We begin with the raw amino-acid sequence, 790 residues long: Alpha,alpha-trehalose-phosphate synthase [UDP-forming] B (790 aa).

It in the N-terminal section; belongs to the glycosyltransferase 20 family. In the C-terminal section; belongs to the trehalose phosphatase family.

It catalyses the reaction D-glucose 6-phosphate + UDP-alpha-D-glucose = alpha,alpha-trehalose 6-phosphate + UDP + H(+). Synthesizes trehalose 6-phosphate, the precursor for the production of trehalose, the main carbohydrate storage reserve of the dormant spore. Trehalose accumulates in both prestalk and prespore cells and then is rapidly metabolized during terminal differentiation of stalk cells, while being stored in spores, where it serves as the principal energy and carbon source for germination. The chain is Alpha,alpha-trehalose-phosphate synthase [UDP-forming] B (tpsB) from Dictyostelium discoideum (Social amoeba).